The sequence spans 189 residues: Elongation factor P (189 aa).

Residue lysine 34 is modified to N6-(3,6-diaminohexanoyl)-5-hydroxylysine.

It belongs to the elongation factor P family. Post-translationally, may be beta-lysylated on the epsilon-amino group of Lys-34 by the combined action of EpmA and EpmB, and then hydroxylated on the C5 position of the same residue by EpmC (if this protein is present). Lysylation is critical for the stimulatory effect of EF-P on peptide-bond formation. The lysylation moiety may extend toward the peptidyltransferase center and stabilize the terminal 3-CCA end of the tRNA. Hydroxylation of the C5 position on Lys-34 may allow additional potential stabilizing hydrogen-bond interactions with the P-tRNA.

Its subcellular location is the cytoplasm. It participates in protein biosynthesis; polypeptide chain elongation. Functionally, involved in peptide bond synthesis. Alleviates ribosome stalling that occurs when 3 or more consecutive Pro residues or the sequence PPG is present in a protein, possibly by augmenting the peptidyl transferase activity of the ribosome. Modification of Lys-34 is required for alleviation. The sequence is that of Elongation factor P from Dichelobacter nodosus (strain VCS1703A).